Reading from the N-terminus, the 266-residue chain is Ribosomal RNA small subunit methyltransferase A (266 aa).

6 residues coordinate S-adenosyl-L-methionine: N13, L15, G40, E61, D86, and N110.

It belongs to the class I-like SAM-binding methyltransferase superfamily. rRNA adenine N(6)-methyltransferase family. RsmA subfamily.

Its subcellular location is the cytoplasm. It carries out the reaction adenosine(1518)/adenosine(1519) in 16S rRNA + 4 S-adenosyl-L-methionine = N(6)-dimethyladenosine(1518)/N(6)-dimethyladenosine(1519) in 16S rRNA + 4 S-adenosyl-L-homocysteine + 4 H(+). In terms of biological role, specifically dimethylates two adjacent adenosines (A1518 and A1519) in the loop of a conserved hairpin near the 3'-end of 16S rRNA in the 30S particle. May play a critical role in biogenesis of 30S subunits. The polypeptide is Ribosomal RNA small subunit methyltransferase A (Hydrogenovibrio crunogenus (strain DSM 25203 / XCL-2) (Thiomicrospira crunogena)).